A 911-amino-acid chain; its full sequence is Valine--tRNA ligase (911 aa).

The 'HIGH' region signature appears at 57-67 (PTVSGSLHVGH). The 'KMSKS' region signature appears at 599–603 (KMSKS). Lys602 contributes to the ATP binding site. The segment at 882–911 (EESAAEDAPETEVAVEASELGEPPAKKPKH) is disordered.

It belongs to the class-I aminoacyl-tRNA synthetase family. ValS type 2 subfamily. Monomer.

It localises to the cytoplasm. The enzyme catalyses tRNA(Val) + L-valine + ATP = L-valyl-tRNA(Val) + AMP + diphosphate. In terms of biological role, catalyzes the attachment of valine to tRNA(Val). As ValRS can inadvertently accommodate and process structurally similar amino acids such as threonine, to avoid such errors, it has a 'posttransfer' editing activity that hydrolyzes mischarged Thr-tRNA(Val) in a tRNA-dependent manner. The chain is Valine--tRNA ligase from Bifidobacterium longum (strain DJO10A).